The following is a 287-amino-acid chain: Probable WRKY transcription factor 57 (287 aa).

Residues 86-99 are compositionally biased toward low complexity; that stretch reads TSTNNNPSATSSSS. The tract at residues 86 to 137 is disordered; the sequence is TSTNNNPSATSSSSEDPAENSTASAEKTPPPETPVKEKKKAQKRIRQPRFAF. Basic residues predominate over residues 122-132; the sequence is EKKKAQKRIRQ. Residues 141–206 constitute a DNA-binding region (WRKY); that stretch reads SDVDNLEDGY…YEGQHCHQTI (66 aa). Positions 248–287 are disordered; it reads DNNAPSPRLPRPTTEDTPAVSTPSEEGLLGDIVPQTMRNP. Over residues 262–271 the composition is skewed to polar residues; sequence EDTPAVSTPS.

This sequence belongs to the WRKY group II-c family.

The protein resides in the nucleus. In terms of biological role, transcription factor. Interacts specifically with the W box (5'-(T)TGAC[CT]-3'), a frequently occurring elicitor-responsive cis-acting element. The polypeptide is Probable WRKY transcription factor 57 (WRKY57) (Arabidopsis thaliana (Mouse-ear cress)).